A 207-amino-acid chain; its full sequence is 3-isopropylmalate dehydratase small subunit (207 aa).

Belongs to the LeuD family. LeuD type 1 subfamily. As to quaternary structure, heterodimer of LeuC and LeuD.

It catalyses the reaction (2R,3S)-3-isopropylmalate = (2S)-2-isopropylmalate. The protein operates within amino-acid biosynthesis; L-leucine biosynthesis; L-leucine from 3-methyl-2-oxobutanoate: step 2/4. In terms of biological role, catalyzes the isomerization between 2-isopropylmalate and 3-isopropylmalate, via the formation of 2-isopropylmaleate. The sequence is that of 3-isopropylmalate dehydratase small subunit from Rhodospirillum rubrum (strain ATCC 11170 / ATH 1.1.1 / DSM 467 / LMG 4362 / NCIMB 8255 / S1).